Here is a 93-residue protein sequence, read N- to C-terminus: Protamine-3 (93 aa).

Residues 1–93 are disordered; the sequence is MGSRCAKLGT…QSPEPKQTRS (93 aa). The segment covering 37-57 has biased composition (acidic residues); it reads EGEEEEEGEEEEEEEGEEEEL. Residues 81-93 show a composition bias toward polar residues; it reads EVQQSPEPKQTRS. S85 is modified (phosphoserine).

This sequence belongs to the protamine P3 family.

Its subcellular location is the nucleus. It is found in the chromosome. Functionally, protamines substitute for histones in the chromatin of sperm during the haploid phase of spermatogenesis. They compact sperm DNA into a highly condensed, stable and inactive complex. The sequence is that of Protamine-3 (PRM3) from Bos taurus (Bovine).